A 312-amino-acid polypeptide reads, in one-letter code: tRNA pseudouridine synthase B (312 aa).

The active-site Nucleophile is the Asp-47.

Belongs to the pseudouridine synthase TruB family. Type 1 subfamily.

The catalysed reaction is uridine(55) in tRNA = pseudouridine(55) in tRNA. Its function is as follows. Responsible for synthesis of pseudouridine from uracil-55 in the psi GC loop of transfer RNAs. The sequence is that of tRNA pseudouridine synthase B from Vibrio cholerae serotype O1 (strain M66-2).